We begin with the raw amino-acid sequence, 372 residues long: uncharacterized protein (372 aa).

The N-terminal stretch at Met-1–Gly-33 is a signal peptide.

To K.pneumoniae RomA.

This is an uncharacterized protein from Mycobacterium bovis (strain ATCC BAA-935 / AF2122/97).